We begin with the raw amino-acid sequence, 782 residues long: DNA repair and recombination protein RAD54-like (782 aa).

The span at Met1–Asp20 shows a compositional bias: polar residues. The tract at residues Met1–Lys28 is disordered. The segment at Arg2 to Gln9 is required for chromatin remodeling, strand pairing activities and coupling of ATPase activity. Phosphothreonine is present on Thr22. In terms of domain architecture, Helicase ATP-binding spans Glu168–Glu343. Asp181 to Thr188 lines the ATP pocket. Residues Asp294–His297 carry the DEGH box motif. A Helicase C-terminal domain is found at Leu501–Thr658. The span at Ser741 to Ser753 shows a compositional bias: polar residues. Positions Ser741–Phe782 are disordered. The span at Asp773–Phe782 shows a compositional bias: acidic residues.

This sequence belongs to the SNF2/RAD54 helicase family. Interacts (via N-terminus) with spn-A/Rad51.

The protein resides in the nucleus. Involved in mitotic DNA repair and meiotic recombination. Functions in the recombinational DNA repair pathway. Essential for interhomolog gene conversion (GC), but may have a less important role in intersister GC than spn-A/Rad51. In the presence of DNA, spn-A/Rad51 enhances the ATPase activity of okr/Rad54. This Drosophila persimilis (Fruit fly) protein is DNA repair and recombination protein RAD54-like.